We begin with the raw amino-acid sequence, 211 residues long: Large ribosomal subunit protein bL25 (211 aa).

Residues 188–211 (APKAAKVSTDDEAAAPAEEAPAAE) form a disordered region. Residues 201-211 (AAPAEEAPAAE) show a composition bias toward low complexity.

The protein belongs to the bacterial ribosomal protein bL25 family. CTC subfamily. As to quaternary structure, part of the 50S ribosomal subunit; part of the 5S rRNA/L5/L18/L25 subcomplex. Contacts the 5S rRNA. Binds to the 5S rRNA independently of L5 and L18.

Its function is as follows. This is one of the proteins that binds to the 5S RNA in the ribosome where it forms part of the central protuberance. In Colwellia psychrerythraea (strain 34H / ATCC BAA-681) (Vibrio psychroerythus), this protein is Large ribosomal subunit protein bL25.